The following is a 378-amino-acid chain: WUSCHEL-related homeobox 9 (378 aa).

2 disordered regions span residues 1–60 and 123–173; these read MASS…NPKP and KHSL…GSQM. A compositionally biased stretch (low complexity) spans 32–42; the sequence is SASHRSSPFSS. The segment covering 45-54 has biased composition (basic and acidic residues); that stretch reads EVERSPEPKP. A DNA-binding region (homeobox; WUS-type) is located at residues 51–115; the sequence is EPKPRWNPKP…NRKSRSKHKL (65 aa). Composition is skewed to low complexity over residues 137 to 152 and 161 to 171; these read PSAS…SSKS and KNNTNLSLGGS.

The protein belongs to the WUS homeobox family. Expressed in the basal cell and later at the boundary between suspensor and proembryo. Expressed at low levels in proliferating tissues post embryonically. Detected in vegetative shoot apical meristem, leaf primordia, floral meristems, emerging floral organs, epidermal layer of the placenta and in the upper portion of the root meristematic zone.

The protein localises to the nucleus. It localises to the cytoplasm. Its function is as follows. Homeodomain transcription factor required for meristem growth and early development. Promotes cell proliferation and prevents premature differentiation in meristematic tissues during postembryonic development. Essential for maintaining tissue growth during embryogenesis. May act by repressing TSS to promote meristematic proliferation. Involved in the transcriptional activation of a subset of cytokinin response factors. May act as a negative regulator of cytokinin signaling in the dark. The sequence is that of WUSCHEL-related homeobox 9 from Arabidopsis thaliana (Mouse-ear cress).